The sequence spans 1333 residues: Partitioning defective 3 homolog (1333 aa).

Serine 25 is subject to Phosphoserine. At threonine 91 the chain carries Phosphothreonine. A disordered region spans residues 143–262 (SSDPALTGLS…VGHADTGLEN (120 aa)). Polar residues-rich tracts occupy residues 150–163 (GLSTSVSDNNFSSE) and 171–187 (TRWSTTAGFLKQNTAGS). 2 positions are modified to phosphoserine: serine 156 and serine 174. Over residues 190–203 (TCDRKKDENYRSLP) the composition is skewed to basic and acidic residues. Polar residues predominate over residues 207–224 (SSWSNQFQRDNARSSLSA). Positions 271–359 (MVKLVQVPND…ARVIWFHVVP (89 aa)) constitute a PDZ 1 domain. Disordered regions lie at residues 369 to 388 (LSQREKNNYSPGRFSPDSHC) and 397 to 441 (NAPQ…APPS). Serine 383 is modified (phosphoserine). 2 PDZ domains span residues 461–546 (NIQL…LVFR) and 590–677 (EVPL…GMIQ). Tyrosine 489 is subject to Phosphotyrosine. Residues serine 692, serine 695, serine 715, serine 728, serine 806, and serine 824 each carry the phosphoserine modification. Interaction with PRKCI and PRKCZ stretches follow at residues 712–932 (RRIS…YDKP) and 712–936 (RRIS…MVDD). N6-acetyllysine is present on lysine 831. Residue serine 834 is modified to Phosphoserine. Lysine 848 carries the N6-acetyllysine modification. Phosphoserine is present on residues serine 849 and serine 869. 5 disordered regions span residues 861 to 884 (TVDDQRAGSPSRDVGPSLGLKKSS), 928 to 1011 (SYDK…AKKG), 1024 to 1071 (KHRK…ERQA), 1110 to 1267 (PQSP…LGGH), and 1283 to 1333 (QEQR…PFYS). Position 881 is an N6-acetyllysine (lysine 881). The interval 931–1333 (KPMVDDDDEG…TPEKGRPFYS (403 aa)) is interaction with FRMD4A. The segment covering 935–949 (DDDDEGMETLEEDTE) has biased composition (acidic residues). Serine 958 carries the post-translational modification Phosphoserine; by AURKA. 2 positions are modified to phosphoserine: serine 967 and serine 969. Composition is skewed to basic and acidic residues over residues 977 to 1005 (DPEKRDKTERKKDKAGKDKKKDREKEKDK) and 1026 to 1039 (RKDDKMEKMGRIKI). A Phosphoserine modification is found at serine 1042. Residues 1046 to 1071 (EEDRVRMKEEQERIQAKTREFRERQA) are compositionally biased toward basic and acidic residues. Positions 1046–1078 (EEDRVRMKEEQERIQAKTREFRERQARERDYAE) form a coiled coil. Positions 1134–1143 (PGDSNRSTPS) are enriched in polar residues. The segment covering 1144–1171 (NHDRIQRLRQEFQQAKQDEDVEDRRRTY) has biased composition (basic and acidic residues). Coiled coils occupy residues 1145-1168 (HDRIQRLRQEFQQAKQDEDVEDRR), 1195-1218 (VQVQRQRQEERESFQQAQRQYSSL), and 1274-1295 (MLETQELLRQEQRRKEQQLKKQ). A compositionally biased stretch (low complexity) spans 1176–1199 (SWSSSRPASQSGRHSVSVEVQVQR). The span at 1215 to 1236 (YSSLPRQSRKNASSISQDSWEQ) shows a compositional bias: polar residues. A compositionally biased stretch (basic and acidic residues) spans 1283–1292 (QEQRRKEQQL). Residues 1314-1323 (SQVARLNRLQ) show a composition bias toward polar residues. Residues 1324–1333 (TPEKGRPFYS) are compositionally biased toward basic and acidic residues. An N6-acetyllysine modification is found at lysine 1327.

It belongs to the PAR3 family. Interacts with PRCKI and CDH5. Interacts (via PDZ 3 domain) with PTEN (via C-terminus). Component of a complex whose core is composed of ARHGAP17, AMOT, PALS1, PATJ and PARD3/PAR3. Interacts with LIMK2, AURKA and AURKB. Component of the Par polarity complex, composed of at least phosphorylated PRKCZ, PARD3 and TIAM1. Interacts with ECT2 and FBF1. Interacts (via PDZ 1 domain) with F11R/JAM1, PARD6A and PARD6B. Part of a complex with PARD6A or PARD6B, PRKCI or PRKCZ and CDC42 or RAC1. Directly interacts with TIAM1 and TIAM2. Interacts with SIRT2. Interacts (via coiled-coil domain) with FRMD4A. Found in a complex with PARD3, CYTH1 and FRMD4A. Interacts with SAPCD2. Interacts with PRKCA. As to quaternary structure, interacts with PRKCZ. Post-translationally, acetylated. Deacetylated by SIRT2, thereby inhibiting Schwann cell peripheral myelination. In terms of processing, phosphorylation at Ser-824 by PRKCZ and PRKCI occurs at the most apical tip of epithelial cell-cell contacts during the initial phase of tight junction formation and may promote dissociation of the complex with PARD6. EGF-induced Tyr-1123 phosphorylation mediates dissociation from LIMK2. Phosphorylation by AURKA at Ser-958 is required for the normal establishment of neuronal polarity. Isoform 4 and isoform 5 are phosphorylated during oocyte maturation. In terms of tissue distribution, all isoforms are expressed in heart, while expression in brain is mainly limited to isoform 1, and to isoform 3 to a weaker level.

Its subcellular location is the cytoplasm. It is found in the endomembrane system. The protein resides in the cell junction. The protein localises to the tight junction. It localises to the adherens junction. Its subcellular location is the cell cortex. It is found in the cytoskeleton. The protein resides in the cell membrane. Adapter protein involved in asymmetrical cell division and cell polarization processes. Seems to play a central role in the formation of epithelial tight junctions. Targets the phosphatase PTEN to cell junctions. Association with PARD6B may prevent the interaction of PARD3 with F11R/JAM1, thereby preventing tight junction assembly. The PARD6-PARD3 complex links GTP-bound Rho small GTPases to atypical protein kinase C proteins. Required for establishment of neuronal polarity and normal axon formation in cultured hippocampal neurons. Involved in Schwann cell peripheral myelination. The sequence is that of Partitioning defective 3 homolog (Pard3) from Mus musculus (Mouse).